The primary structure comprises 478 residues: UDP-N-acetylmuramate--L-alanine ligase (478 aa).

122–128 (GTHGKTT) provides a ligand contact to ATP.

It belongs to the MurCDEF family.

The protein resides in the cytoplasm. The enzyme catalyses UDP-N-acetyl-alpha-D-muramate + L-alanine + ATP = UDP-N-acetyl-alpha-D-muramoyl-L-alanine + ADP + phosphate + H(+). It functions in the pathway cell wall biogenesis; peptidoglycan biosynthesis. Functionally, cell wall formation. This Stenotrophomonas maltophilia (strain K279a) protein is UDP-N-acetylmuramate--L-alanine ligase.